Consider the following 212-residue polypeptide: Outer-membrane lipoprotein carrier protein (212 aa).

An N-terminal signal peptide occupies residues 1–29 (MSSARRRALGFSFQALLLCAAGWHGAAQA).

Belongs to the LolA family. In terms of assembly, monomer.

The protein resides in the periplasm. Its function is as follows. Participates in the translocation of lipoproteins from the inner membrane to the outer membrane. Only forms a complex with a lipoprotein if the residue after the N-terminal Cys is not an aspartate (The Asp acts as a targeting signal to indicate that the lipoprotein should stay in the inner membrane). In Leptothrix cholodnii (strain ATCC 51168 / LMG 8142 / SP-6) (Leptothrix discophora (strain SP-6)), this protein is Outer-membrane lipoprotein carrier protein.